Consider the following 354-residue polypeptide: MRKRISAIIMTLFMVLVSCNSGGVAEDPKTVYLTSIANLGKGFLDVFVTFGDMVTGAFGIKADTKKSDIGKYFTDIEKTMTSVKKKLQDEVVKNGNYAKVKTVVAKFIEEVLDKIAAGAKEAAKGATGSDAIGNAVHNQDAVAADATSVNALVKGIGEIVEVVLKDGEGDAGATKTGDTEKKSIGKLFAKKDDDRAQEAEASAANASIGAVSGADILKAIAKSGEIADNNKNIEEAKDAASIAAAKQTDDKKEIKDEAAKKDAVIAAGIALRAMAKGGKFTAKQNEEKSANAVNGAAASAVGKTLSTLIIAIRNTVDSGLKTINEALATVKQEDKSVEATNTAEATTSGQQAKN.

Positions 1–18 (MRKRISAIIMTLFMVLVS) are cleaved as a signal peptide. The N-palmitoyl cysteine moiety is linked to residue C19. C19 is lipidated: S-diacylglycerol cysteine. Positions 333–354 (EDKSVEATNTAEATTSGQQAKN) are disordered. Residues 338–354 (EATNTAEATTSGQQAKN) are compositionally biased toward polar residues.

The protein belongs to the variable large protein (Vlp) family. Delta subfamily.

It localises to the cell outer membrane. Its function is as follows. The Vlp and Vsp proteins are antigenically distinct proteins, only one vlp or vsp gene is transcriptionally active at any one time. Switching between these genes is a mechanism of host immune response evasion. In Borrelia hermsii, this protein is Variable large protein 15/16.